The following is a 266-amino-acid chain: Aquaporin TIP3-2 (266 aa).

Helical transmembrane passes span 29–49 (AAISEFIATAIFVFAAEGSVL) and 66–86 (GLVAVALAHALGLAVAVAVAV). Residues 94–96 (NPA) carry the NPA 1 motif. Helical transmembrane passes span 109–129 (LVRAVLYWAAQLLGAVAATLL), 153–173 (AVLLEAVMTFGFVYAYYATVV), and 180–200 (LGTIAPLAVGFLLGANVLAGG). Positions 208 to 210 (NPA) match the NPA 2 motif. Residues 228 to 248 (YWLGPFLGAGLAGLVYEYLLI) form a helical membrane-spanning segment.

Belongs to the MIP/aquaporin (TC 1.A.8) family. TIP (TC 1.A.8.10) subfamily.

It localises to the vacuole membrane. Aquaporins facilitate the transport of water and small neutral solutes across cell membranes. The chain is Aquaporin TIP3-2 (TIP3-2) from Zea mays (Maize).